The sequence spans 479 residues: Protein TRIGALACTOSYLDIACYLGLYCEROL 4, chloroplastic (479 aa).

The chain crosses the lipid bilayer at residues 288–310; that stretch reads VFLSSPHVAVSGIIGSVMTAAFG.

As to quaternary structure, homodimer. Forms dimeric beta-barrel. Interacts with TGD5.

The protein resides in the plastid. It localises to the chloroplast outer membrane. It is found in the endoplasmic reticulum. Involved in lipid transfer from the endoplasmic reticulum (ER) to plastids. Specifically binds phosphatidic acid (PtdOH). The polypeptide is Protein TRIGALACTOSYLDIACYLGLYCEROL 4, chloroplastic (Arabidopsis thaliana (Mouse-ear cress)).